The chain runs to 520 residues: Arabinose import ATP-binding protein AraG (520 aa).

Polar residues predominate over residues 1–10 (MTTQTMTAVS). Residues 1 to 27 (MTTQTMTAVSGNDGDTGGDAAESPPGG) form a disordered region. 2 ABC transporter domains span residues 30-265 (LALD…MVGR) and 265-516 (RSIE…LIKL). Residue 62 to 69 (GENGAGKS) coordinates ATP.

This sequence belongs to the ABC transporter superfamily. Arabinose importer (TC 3.A.1.2.2) family. In terms of assembly, the complex is composed of two ATP-binding proteins (AraG), two transmembrane proteins (AraH) and a solute-binding protein (AraF).

The protein resides in the cell inner membrane. It carries out the reaction L-arabinose(out) + ATP + H2O = L-arabinose(in) + ADP + phosphate + H(+). Functionally, part of the ABC transporter complex AraFGH involved in L-arabinose import. Responsible for energy coupling to the transport system. This chain is Arabinose import ATP-binding protein AraG, found in Azospirillum brasilense.